The sequence spans 228 residues: Flavin-dependent thymidylate synthase (228 aa).

Residues methionine 1–phenylalanine 217 enclose the ThyX domain. Residues threonine 55, arginine 78–arginine 80, and glutamate 86 each bind FAD. DUMP-binding positions include glutamine 75 to arginine 78, glutamate 86 to arginine 90, and arginine 156. Residues arginine 78–serine 88 carry the ThyX motif motif. Residues asparagine 172 to arginine 174 and asparagine 178 contribute to the FAD site. Position 183 (arginine 183) interacts with dUMP. Arginine 183 serves as the catalytic Involved in ionization of N3 of dUMP, leading to its activation.

This sequence belongs to the thymidylate synthase ThyX family. In terms of assembly, homotetramer. The cofactor is FAD.

It carries out the reaction dUMP + (6R)-5,10-methylene-5,6,7,8-tetrahydrofolate + NADPH + H(+) = dTMP + (6S)-5,6,7,8-tetrahydrofolate + NADP(+). The protein operates within pyrimidine metabolism; dTTP biosynthesis. In terms of biological role, catalyzes the reductive methylation of 2'-deoxyuridine-5'-monophosphate (dUMP) to 2'-deoxythymidine-5'-monophosphate (dTMP) while utilizing 5,10-methylenetetrahydrofolate (mTHF) as the methyl donor, and NADPH and FADH(2) as the reductant. The chain is Flavin-dependent thymidylate synthase from Thermosipho africanus (strain TCF52B).